The chain runs to 340 residues: Phosphoribosylformylglycinamidine cyclo-ligase (340 aa).

Belongs to the AIR synthase family.

It localises to the cytoplasm. It catalyses the reaction 2-formamido-N(1)-(5-O-phospho-beta-D-ribosyl)acetamidine + ATP = 5-amino-1-(5-phospho-beta-D-ribosyl)imidazole + ADP + phosphate + H(+). The protein operates within purine metabolism; IMP biosynthesis via de novo pathway; 5-amino-1-(5-phospho-D-ribosyl)imidazole from N(2)-formyl-N(1)-(5-phospho-D-ribosyl)glycinamide: step 2/2. The protein is Phosphoribosylformylglycinamidine cyclo-ligase of Streptococcus pneumoniae serotype 4 (strain ATCC BAA-334 / TIGR4).